Here is a 578-residue protein sequence, read N- to C-terminus: Interleukin-10 receptor subunit alpha (578 aa).

The signal sequence occupies residues 1–21 (MLPCLVVLLAALLSLRLGSDA). Over 22–235 (HGTELPSPPS…LTRQYFTVTN (214 aa)) the chain is Extracellular. N50, N74, N110, N154, N177, and N189 each carry an N-linked (GlcNAc...) asparagine glycan. The cysteines at positions 56 and 75 are disulfide-linked. C202 and C223 form a disulfide bridge. The chain crosses the membrane as a helical span at residues 236–256 (VIIFFAFVLLLSGALAYCLAL). Topologically, residues 257–578 (QLYVRRRKKL…PLISSLQSSE (322 aa)) are cytoplasmic. The segment at 313–436 (LHGSTDSGFG…PPEPEVPGEE (124 aa)) is disordered. Residues 316–332 (STDSGFGSTKPSLQTEE) show a composition bias toward polar residues. The short motif at 318 to 323 (DSGFGS) is the BTRC recognition motif element. Low complexity predominate over residues 357–371 (GDSCSSGSSNSTDSG). Over residues 377 to 396 (PSLSPSTGPTWEQQVGSNSR) the composition is skewed to polar residues.

Belongs to the type II cytokine receptor family. In terms of assembly, interacts with IL10. Interacts with IL10RB. Interacts (via its cytoplasmic domain) with JAK1 (via N-terminus). Interacts with BTRC; this interaction leads to IL10RA ubiquitination and subsequent degradation. Interacts with STAT3. As to quaternary structure, (Microbial infection) Interacts with human cytomegalovirus protein IL10. (Microbial infection) Interacts with Epstein-Barr virus protein IL10. Post-translationally, phosphorylated. Phosphorylation of the cytoplasmic tail induced STAT3 activation. Ubiquitinated by BTRC; ubiquitination leads to endocytosis and subsequent degradation of IL10RA. Primarily expressed in hematopoetic cells including B-cells, T-cells, NK cells, monocytes and macrophages. Not expressed in non-hematopoetic cells such as fibroblasts or endothelial cells.

The protein resides in the cell membrane. The protein localises to the cytoplasm. Cell surface receptor for the cytokine IL10 that participates in IL10-mediated anti-inflammatory functions, limiting excessive tissue disruption caused by inflammation. Upon binding to IL10, induces a conformational change in IL10RB, allowing IL10RB to bind IL10 as well. In turn, the heterotetrameric assembly complex, composed of two subunits of IL10RA and IL10RB, activates the kinases JAK1 and TYK2 that are constitutively associated with IL10RA and IL10RB respectively. These kinases then phosphorylate specific tyrosine residues in the intracellular domain in IL10RA leading to the recruitment and subsequent phosphorylation of STAT3. Once phosphorylated, STAT3 homodimerizes, translocates to the nucleus and activates the expression of anti-inflammatory genes. In addition, IL10RA-mediated activation of STAT3 inhibits starvation-induced autophagy. This chain is Interleukin-10 receptor subunit alpha (IL10RA), found in Homo sapiens (Human).